Reading from the N-terminus, the 388-residue chain is Yellow-related salivary protein SP03 (388 aa).

Positions 1–18 (MKIFLCLIAVVSLQGVLA) are cleaved as a signal peptide. N-linked (GlcNAc...) asparagine glycosylation is present at N29.

The protein belongs to the major royal jelly protein family. In terms of tissue distribution, female salivary gland (at protein level).

It localises to the secreted. In terms of biological role, probably modulates blood feeding of sand flies on vertebrate species by binding and sequestering different mediators involved in the host response. Binds biogenic amines. Binds noradrenaline with medium affinity. Binds octopamine with low affinity. Poorly binds histamine, adrenaline and serotonin. The polypeptide is Yellow-related salivary protein SP03 (Phlebotomus perniciosus (Phlebotomine sand fly)).